The primary structure comprises 208 residues: Thymidylate kinase (208 aa).

10 to 17 (GIDGCGKT) contributes to the ATP binding site.

Belongs to the thymidylate kinase family.

The catalysed reaction is dTMP + ATP = dTDP + ADP. In terms of biological role, phosphorylation of dTMP to form dTDP in both de novo and salvage pathways of dTTP synthesis. The sequence is that of Thymidylate kinase from Caldanaerobacter subterraneus subsp. tengcongensis (strain DSM 15242 / JCM 11007 / NBRC 100824 / MB4) (Thermoanaerobacter tengcongensis).